Here is a 198-residue protein sequence, read N- to C-terminus: Myc target protein 1 homolog (198 aa).

Residues 52-72 (RRRASASISPRMPKSSSRRPR) carry the Bipartite nuclear localization signal motif. 2 disordered regions span residues 58–83 (SISP…LNRS) and 172–198 (NNSL…FPDS). Polar residues predominate over residues 172–181 (NNSLRLGPST).

Belongs to the MYCT1 family.

It localises to the nucleus. Functionally, may regulate certain MYC target genes, MYC seems to be a direct upstream transcriptional activator. The polypeptide is Myc target protein 1 homolog (myct1) (Xenopus tropicalis (Western clawed frog)).